We begin with the raw amino-acid sequence, 174 residues long: Nucleoside-triphosphatase THEP1 (174 aa).

Residues 15-22 and 102-109 contribute to the ATP site; these read GMPGVGKT and LAIVDEIG.

Belongs to the THEP1 NTPase family.

The catalysed reaction is a ribonucleoside 5'-triphosphate + H2O = a ribonucleoside 5'-diphosphate + phosphate + H(+). Functionally, has nucleotide phosphatase activity towards ATP, GTP, CTP, TTP and UTP. May hydrolyze nucleoside diphosphates with lower efficiency. The polypeptide is Nucleoside-triphosphatase THEP1 (Pyrobaculum islandicum (strain DSM 4184 / JCM 9189 / GEO3)).